A 474-amino-acid chain; its full sequence is ATP synthase subunit beta (474 aa).

155 to 162 (GGAGVGKT) contributes to the ATP binding site.

Belongs to the ATPase alpha/beta chains family. F-type ATPases have 2 components, CF(1) - the catalytic core - and CF(0) - the membrane proton channel. CF(1) has five subunits: alpha(3), beta(3), gamma(1), delta(1), epsilon(1). CF(0) has three main subunits: a(1), b(2) and c(9-12). The alpha and beta chains form an alternating ring which encloses part of the gamma chain. CF(1) is attached to CF(0) by a central stalk formed by the gamma and epsilon chains, while a peripheral stalk is formed by the delta and b chains.

It localises to the cell inner membrane. It catalyses the reaction ATP + H2O + 4 H(+)(in) = ADP + phosphate + 5 H(+)(out). Its function is as follows. Produces ATP from ADP in the presence of a proton gradient across the membrane. The catalytic sites are hosted primarily by the beta subunits. The chain is ATP synthase subunit beta from Sorangium cellulosum (strain So ce56) (Polyangium cellulosum (strain So ce56)).